Here is a 296-residue protein sequence, read N- to C-terminus: Centromere protein O (296 aa).

Residues 17–105 are a coiled coil; the sequence is VLAHLERLET…NMKAILQAYR (89 aa).

The protein belongs to the CENP-O/MCM21 family. Component of the CENPA-CAD complex, composed of CENPI, CENPK, CENPL, CENPO, CENPP, CENPQ, CENPR and CENPS. The CENPA-CAD complex interacts with the CENPA-NAC complex, at least composed of CENPA, CENPC, CENPH, CENPM, CENPN, CENPT and CENPU.

It is found in the nucleus. The protein localises to the chromosome. Its subcellular location is the centromere. The protein resides in the kinetochore. Functionally, component of the CENPA-CAD (nucleosome distal) complex, a complex recruited to centromeres which is involved in assembly of kinetochore proteins, mitotic progression and chromosome segregation. May be involved in incorporation of newly synthesized CENPA into centromeres via its interaction with the CENPA-NAC complex. Modulates the kinetochore-bound levels of NDC80 complex. The protein is Centromere protein O (CENPO) of Bos taurus (Bovine).